A 426-amino-acid chain; its full sequence is Serine--tRNA ligase (426 aa).

Residue 228 to 230 (TSE) participates in L-serine binding. ATP contacts are provided by residues 259-261 (RRE) and Val-275. Glu-282 lines the L-serine pocket. 346–349 (ELTS) serves as a coordination point for ATP. Thr-386 serves as a coordination point for L-serine.

Belongs to the class-II aminoacyl-tRNA synthetase family. Type-1 seryl-tRNA synthetase subfamily. In terms of assembly, homodimer. The tRNA molecule binds across the dimer.

It is found in the cytoplasm. The enzyme catalyses tRNA(Ser) + L-serine + ATP = L-seryl-tRNA(Ser) + AMP + diphosphate + H(+). It carries out the reaction tRNA(Sec) + L-serine + ATP = L-seryl-tRNA(Sec) + AMP + diphosphate + H(+). The protein operates within aminoacyl-tRNA biosynthesis; selenocysteinyl-tRNA(Sec) biosynthesis; L-seryl-tRNA(Sec) from L-serine and tRNA(Sec): step 1/1. Functionally, catalyzes the attachment of serine to tRNA(Ser). Is also able to aminoacylate tRNA(Sec) with serine, to form the misacylated tRNA L-seryl-tRNA(Sec), which will be further converted into selenocysteinyl-tRNA(Sec). The polypeptide is Serine--tRNA ligase (Arthrobacter sp. (strain FB24)).